The primary structure comprises 424 residues: MTAIVDIVGREILDSRGNPTVEVDVVLEDGSIGRAAVPSGASTGAHEAVELRDGGPRYLGKGVARAVEAVNGEIFEAIGGLEAEDQIHIDRTMIELDGTPNKSRLGANAILGVSLAVAKATAAASGLPLYRYVGGASAHILPVPMMNILNGGAHADNPIDFQEFMIMPVGAPTLRDAVRWGSEIFHTLKSGLKAAGHNTNVGDEGGFAPNLKDANAALDFIMASIEKAGFKPGDEVAIALDCAATEFFKDGKYVYEGEGQTRDAQAQAEYLSKLAGEYPIISIEDGMAEDDFEGWKALTDLAGSKVQLVGDDLFVTNAARLKDGINMGIANSILVKVNQIGSLTETLEAVETAHKAAYTAVMSHRSGETEDSTIADLAVATNCGQIKTGSLARSDRLAKYNQLIRIEEQLGRAARYAGRTVVRG.

Residue glutamine 162 coordinates (2R)-2-phosphoglycerate. The active-site Proton donor is glutamate 204. Mg(2+) contacts are provided by aspartate 241, glutamate 284, and aspartate 311. Residues lysine 336, arginine 365, serine 366, and lysine 387 each coordinate (2R)-2-phosphoglycerate. The Proton acceptor role is filled by lysine 336.

It belongs to the enolase family. It depends on Mg(2+) as a cofactor.

It localises to the cytoplasm. Its subcellular location is the secreted. The protein localises to the cell surface. It carries out the reaction (2R)-2-phosphoglycerate = phosphoenolpyruvate + H2O. It participates in carbohydrate degradation; glycolysis; pyruvate from D-glyceraldehyde 3-phosphate: step 4/5. Its function is as follows. Catalyzes the reversible conversion of 2-phosphoglycerate (2-PG) into phosphoenolpyruvate (PEP). It is essential for the degradation of carbohydrates via glycolysis. This chain is Enolase, found in Chelativorans sp. (strain BNC1).